The chain runs to 195 residues: Imidazoleglycerol-phosphate dehydratase (195 aa).

The protein belongs to the imidazoleglycerol-phosphate dehydratase family.

The protein resides in the cytoplasm. The catalysed reaction is D-erythro-1-(imidazol-4-yl)glycerol 3-phosphate = 3-(imidazol-4-yl)-2-oxopropyl phosphate + H2O. It participates in amino-acid biosynthesis; L-histidine biosynthesis; L-histidine from 5-phospho-alpha-D-ribose 1-diphosphate: step 6/9. This is Imidazoleglycerol-phosphate dehydratase from Geobacillus kaustophilus (strain HTA426).